Reading from the N-terminus, the 195-residue chain is Imidazoleglycerol-phosphate dehydratase (195 aa).

It belongs to the imidazoleglycerol-phosphate dehydratase family.

Its subcellular location is the cytoplasm. The catalysed reaction is D-erythro-1-(imidazol-4-yl)glycerol 3-phosphate = 3-(imidazol-4-yl)-2-oxopropyl phosphate + H2O. It participates in amino-acid biosynthesis; L-histidine biosynthesis; L-histidine from 5-phospho-alpha-D-ribose 1-diphosphate: step 6/9. This Deinococcus radiodurans (strain ATCC 13939 / DSM 20539 / JCM 16871 / CCUG 27074 / LMG 4051 / NBRC 15346 / NCIMB 9279 / VKM B-1422 / R1) protein is Imidazoleglycerol-phosphate dehydratase.